The primary structure comprises 520 residues: GMP synthase [glutamine-hydrolyzing] (520 aa).

In terms of domain architecture, Glutamine amidotransferase type-1 spans 12–202 (KIIVLDFGSQ…AFDVCGCTGD (191 aa)). Cysteine 89 functions as the Nucleophile in the catalytic mechanism. Active-site residues include histidine 176 and glutamate 178. A GMPS ATP-PPase domain is found at 203 to 395 (WSMENFIDME…LGMPDAIVWR (193 aa)). 230 to 236 (SGGVDSS) is a binding site for ATP.

As to quaternary structure, homodimer.

It carries out the reaction XMP + L-glutamine + ATP + H2O = GMP + L-glutamate + AMP + diphosphate + 2 H(+). Its pathway is purine metabolism; GMP biosynthesis; GMP from XMP (L-Gln route): step 1/1. Catalyzes the synthesis of GMP from XMP. This is GMP synthase [glutamine-hydrolyzing] from Enterococcus faecalis (strain ATCC 700802 / V583).